The chain runs to 154 residues: uncharacterized protein (154 aa).

Residues 1-42 constitute a mitochondrion transit peptide; sequence MLRVIWKHSSRVTRSIELSNISTTNHTRSLRRLSWISPRRFY.

The protein localises to the mitochondrion. This is an uncharacterized protein from Saccharomyces cerevisiae (strain ATCC 204508 / S288c) (Baker's yeast).